The chain runs to 83 residues: Small ribosomal subunit protein uS17c (83 aa).

This sequence belongs to the universal ribosomal protein uS17 family. Part of the 30S ribosomal subunit.

It localises to the plastid. The protein localises to the chloroplast. Its function is as follows. One of the primary rRNA binding proteins, it binds specifically to the 5'-end of 16S ribosomal RNA. This chain is Small ribosomal subunit protein uS17c (rps17), found in Pyropia yezoensis (Susabi-nori).